A 609-amino-acid chain; its full sequence is UvrABC system protein C (609 aa).

The GIY-YIG domain occupies 15–92 (TGSGVYQIQD…IKQFRPRYNV (78 aa)). A UVR domain is found at 202-237 (DQVIIKLTERMEVASENLVFEEAAHYRDQIRQLRRL).

The protein belongs to the UvrC family. In terms of assembly, interacts with UvrB in an incision complex.

The protein localises to the cytoplasm. In terms of biological role, the UvrABC repair system catalyzes the recognition and processing of DNA lesions. UvrC both incises the 5' and 3' sides of the lesion. The N-terminal half is responsible for the 3' incision and the C-terminal half is responsible for the 5' incision. The polypeptide is UvrABC system protein C (Coxiella burnetii (strain Dugway 5J108-111)).